A 310-amino-acid polypeptide reads, in one-letter code: Ribosomal RNA small subunit methyltransferase H (310 aa).

S-adenosyl-L-methionine is bound by residues Ala32–His34, Asp51, Phe78, Asp99, and Gln106. Residues Gly290–Lys310 form a disordered region.

Belongs to the methyltransferase superfamily. RsmH family.

It is found in the cytoplasm. The catalysed reaction is cytidine(1402) in 16S rRNA + S-adenosyl-L-methionine = N(4)-methylcytidine(1402) in 16S rRNA + S-adenosyl-L-homocysteine + H(+). Specifically methylates the N4 position of cytidine in position 1402 (C1402) of 16S rRNA. The polypeptide is Ribosomal RNA small subunit methyltransferase H (Exiguobacterium sp. (strain ATCC BAA-1283 / AT1b)).